The following is a 463-amino-acid chain: Glutamyl-tRNA(Gln) amidotransferase subunit A, mitochondrial (463 aa).

Residues Lys-47 and Ser-124 each act as charge relay system in the active site. The active-site Acyl-ester intermediate is the Ser-148.

It belongs to the amidase family. GatA subfamily. Subunit of the heterotrimeric GatFAB amidotransferase (AdT) complex, composed of A, B and F subunits.

The protein localises to the mitochondrion. It carries out the reaction L-glutamyl-tRNA(Gln) + L-glutamine + ATP + H2O = L-glutaminyl-tRNA(Gln) + L-glutamate + ADP + phosphate + H(+). Its function is as follows. Allows the formation of correctly charged Gln-tRNA(Gln) through the transamidation of misacylated Glu-tRNA(Gln) in the mitochondria. The reaction takes place in the presence of glutamine and ATP through an activated gamma-phospho-Glu-tRNA(Gln). The chain is Glutamyl-tRNA(Gln) amidotransferase subunit A, mitochondrial from Eremothecium gossypii (strain ATCC 10895 / CBS 109.51 / FGSC 9923 / NRRL Y-1056) (Yeast).